Reading from the N-terminus, the 66-residue chain is MSGKKSPYPDGRIPDRNPDGTPAVPWRSRWTEGVLPLWLVATAGGMAVLFVVGLFFYGSYTGVGSA.

Residues 1-25 (MSGKKSPYPDGRIPDRNPDGTPAVP) are disordered. The chain crosses the membrane as a helical span at residues 37–57 (LWLVATAGGMAVLFVVGLFFY).

Belongs to the PsbJ family. As to quaternary structure, PSII is composed of 1 copy each of membrane proteins PsbA, PsbB, PsbC, PsbD, PsbE, PsbF, PsbH, PsbI, PsbJ, PsbK, PsbL, PsbM, PsbT, PsbX, PsbY, PsbZ, Psb30/Ycf12, peripheral proteins PsbO, CyanoQ (PsbQ), PsbU, PsbV and a large number of cofactors. It forms dimeric complexes.

The protein resides in the cellular thylakoid membrane. One of the components of the core complex of photosystem II (PSII). PSII is a light-driven water:plastoquinone oxidoreductase that uses light energy to abstract electrons from H(2)O, generating O(2) and a proton gradient subsequently used for ATP formation. It consists of a core antenna complex that captures photons, and an electron transfer chain that converts photonic excitation into a charge separation. The chain is Photosystem II reaction center protein J from Synechococcus sp. (strain CC9605).